The primary structure comprises 100 residues: Urease subunit gamma (100 aa).

The protein belongs to the urease gamma subunit family. In terms of assembly, heterotrimer of UreA (gamma), UreB (beta) and UreC (alpha) subunits. Three heterotrimers associate to form the active enzyme.

Its subcellular location is the cytoplasm. The catalysed reaction is urea + 2 H2O + H(+) = hydrogencarbonate + 2 NH4(+). It participates in nitrogen metabolism; urea degradation; CO(2) and NH(3) from urea (urease route): step 1/1. The chain is Urease subunit gamma from Paenarthrobacter aurescens (strain TC1).